A 287-amino-acid chain; its full sequence is Nucleotide-binding protein HEAR2885 (287 aa).

ATP is bound at residue 8–15 (GISGSGKS). 57–60 (DVRS) contributes to the GTP binding site.

It belongs to the RapZ-like family.

Displays ATPase and GTPase activities. The chain is Nucleotide-binding protein HEAR2885 from Herminiimonas arsenicoxydans.